Here is a 102-residue protein sequence, read N- to C-terminus: Citrate lyase acyl carrier protein (102 aa).

Serine 14 is subject to O-(phosphoribosyl dephospho-coenzyme A)serine.

The protein belongs to the CitD family. As to quaternary structure, oligomer with a subunit composition of (alpha,beta,gamma)6.

The protein resides in the cytoplasm. In terms of biological role, covalent carrier of the coenzyme of citrate lyase. This Streptococcus equi subsp. zooepidemicus (strain MGCS10565) protein is Citrate lyase acyl carrier protein.